Reading from the N-terminus, the 93-residue chain is Large ribosomal subunit protein bL31 (93 aa).

Residues 68–93 (GSADAAADEKKTDAKNNNKDNTSKED) are disordered. Basic and acidic residues predominate over residues 74–93 (ADEKKTDAKNNNKDNTSKED).

This sequence belongs to the bacterial ribosomal protein bL31 family. Type A subfamily. As to quaternary structure, part of the 50S ribosomal subunit.

In terms of biological role, binds the 23S rRNA. This Prochlorococcus marinus (strain MIT 9303) protein is Large ribosomal subunit protein bL31.